Reading from the N-terminus, the 360-residue chain is Peptide chain release factor 1 (360 aa).

The residue at position 235 (glutamine 235) is an N5-methylglutamine.

The protein belongs to the prokaryotic/mitochondrial release factor family. In terms of processing, methylated by PrmC. Methylation increases the termination efficiency of RF1.

The protein localises to the cytoplasm. Functionally, peptide chain release factor 1 directs the termination of translation in response to the peptide chain termination codons UAG and UAA. The chain is Peptide chain release factor 1 from Dechloromonas aromatica (strain RCB).